A 323-amino-acid chain; its full sequence is Elongation factor P--(R)-beta-lysine ligase (323 aa).

Residue 74 to 76 participates in substrate binding; the sequence is SPE. ATP contacts are provided by residues 98–100 and asparagine 107; that span reads RNE. Tyrosine 116 provides a ligand contact to substrate. 242 to 243 serves as a coordination point for ATP; that stretch reads EL. Glutamate 249 contacts substrate. An ATP-binding site is contributed by glycine 298.

Belongs to the class-II aminoacyl-tRNA synthetase family. EpmA subfamily. In terms of assembly, homodimer.

It carries out the reaction D-beta-lysine + L-lysyl-[protein] + ATP = N(6)-((3R)-3,6-diaminohexanoyl)-L-lysyl-[protein] + AMP + diphosphate + H(+). With EpmB is involved in the beta-lysylation step of the post-translational modification of translation elongation factor P (EF-P). Catalyzes the ATP-dependent activation of (R)-beta-lysine produced by EpmB, forming a lysyl-adenylate, from which the beta-lysyl moiety is then transferred to the epsilon-amino group of a conserved specific lysine residue in EF-P. The protein is Elongation factor P--(R)-beta-lysine ligase of Vibrio atlanticus (strain LGP32) (Vibrio splendidus (strain Mel32)).